We begin with the raw amino-acid sequence, 374 residues long: 5-pentadecatrienyl resorcinol O-methyltransferase (374 aa).

Positions 239, 261, 262, and 275 each coordinate S-adenosyl-L-methionine. Histidine 279 acts as the Proton acceptor in catalysis.

It belongs to the class I-like SAM-binding methyltransferase superfamily. Cation-independent O-methyltransferase family. COMT subfamily. Homodimer. As to expression, expressed predominantly in root hairs.

It catalyses the reaction (8Z,11Z)-5-(pentadeca-8,11,14-trien-1-yl)resorcinol + S-adenosyl-L-methionine = (8Z,11Z)-5-(pentadeca- 8,11,14-trien-1-yl)resorcinol-3-methyl ether + S-adenosyl-L-homocysteine + H(+). In terms of biological role, O-methyltransferase involved in the biosynthetic pathway of the phytotoxin sorgoleone, a potent broad-spectrum inhibitor active against many agronomically important monocot and dicot weed species. Substrate specificity for alkylresorcinols. Strong preference for a five carbons alkyl side chain. The sequence is that of 5-pentadecatrienyl resorcinol O-methyltransferase (OMT3) from Sorghum bicolor (Sorghum).